Reading from the N-terminus, the 225-residue chain is ATP-dependent dethiobiotin synthetase BioD (225 aa).

12-17 (GVGKTV) is a binding site for ATP. Residue T16 participates in Mg(2+) binding. The active site involves K37. Residue T41 participates in substrate binding. ATP is bound by residues D49, 108–111 (EGAG), and 197–199 (PAG). 2 residues coordinate Mg(2+): D49 and E108.

The protein belongs to the dethiobiotin synthetase family. As to quaternary structure, homodimer. Requires Mg(2+) as cofactor.

The protein localises to the cytoplasm. The catalysed reaction is (7R,8S)-7,8-diammoniononanoate + CO2 + ATP = (4R,5S)-dethiobiotin + ADP + phosphate + 3 H(+). It participates in cofactor biosynthesis; biotin biosynthesis; biotin from 7,8-diaminononanoate: step 1/2. Its function is as follows. Catalyzes a mechanistically unusual reaction, the ATP-dependent insertion of CO2 between the N7 and N8 nitrogen atoms of 7,8-diaminopelargonic acid (DAPA, also called 7,8-diammoniononanoate) to form a ureido ring. In Mycolicibacterium smegmatis (strain ATCC 700084 / mc(2)155) (Mycobacterium smegmatis), this protein is ATP-dependent dethiobiotin synthetase BioD.